We begin with the raw amino-acid sequence, 292 residues long: uncharacterized protein (292 aa).

This sequence belongs to the glycosyltransferase 2 family. WaaE/KdtX subfamily.

This is an uncharacterized protein from Rickettsia prowazekii (strain Madrid E).